The chain runs to 245 residues: Ribosomal RNA large subunit methyltransferase E (245 aa).

Positions methionine 1–lysine 25 are disordered. Positions serine 11–lysine 25 are enriched in basic residues. The S-adenosyl-L-methionine site is built by glycine 81, tryptophan 83, aspartate 104, aspartate 120, and aspartate 144. Lysine 184 acts as the Proton acceptor in catalysis.

The protein belongs to the class I-like SAM-binding methyltransferase superfamily. RNA methyltransferase RlmE family.

The protein resides in the cytoplasm. It carries out the reaction uridine(2552) in 23S rRNA + S-adenosyl-L-methionine = 2'-O-methyluridine(2552) in 23S rRNA + S-adenosyl-L-homocysteine + H(+). Functionally, specifically methylates the uridine in position 2552 of 23S rRNA at the 2'-O position of the ribose in the fully assembled 50S ribosomal subunit. The polypeptide is Ribosomal RNA large subunit methyltransferase E (Sinorhizobium fredii (strain NBRC 101917 / NGR234)).